The following is a 433-amino-acid chain: Shikimate O-hydroxycinnamoyltransferase (433 aa).

Catalysis depends on histidine 153, which acts as the Proton acceptor. 4-coumaroyl-CoA contacts are provided by residues 252 to 255, 284 to 290, and 370 to 373; these read SSYE, DGRSRLR, and SWVR. The active-site Proton acceptor is the aspartate 380.

Belongs to the plant acyltransferase family.

The enzyme catalyses shikimate + 4-coumaroyl-CoA = trans-4-coumaroylshikimate + CoA. Functionally, acyltransferase involved in the biosynthesis of lignin. Accepts caffeoyl-CoA and p-coumaroyl-CoA as substrates and transfers the acyl group on both shikimate and quinate acceptors. In Arabidopsis thaliana (Mouse-ear cress), this protein is Shikimate O-hydroxycinnamoyltransferase (HST).